Here is a 358-residue protein sequence, read N- to C-terminus: Methionine aminopeptidase 2 (358 aa).

A substrate-binding site is contributed by H111. A divalent metal cation-binding residues include D131, D142, and H211. H219 is a binding site for substrate. The a divalent metal cation site is built by E244 and E339.

It belongs to the peptidase M24A family. Methionine aminopeptidase eukaryotic type 2 subfamily. Co(2+) is required as a cofactor. Zn(2+) serves as cofactor. Requires Mn(2+) as cofactor. It depends on Fe(2+) as a cofactor.

It is found in the cytoplasm. It catalyses the reaction Release of N-terminal amino acids, preferentially methionine, from peptides and arylamides.. Functionally, cotranslationally removes the N-terminal methionine from nascent proteins. The N-terminal methionine is often cleaved when the second residue in the primary sequence is small and uncharged (Met-Ala-, Cys, Gly, Pro, Ser, Thr, or Val). The polypeptide is Methionine aminopeptidase 2 (Laccaria bicolor (strain S238N-H82 / ATCC MYA-4686) (Bicoloured deceiver)).